A 71-amino-acid polypeptide reads, in one-letter code: uncharacterized protein (71 aa).

The tract at residues Lys-52 to Asp-71 is disordered.

This is an uncharacterized protein from Archaeoglobus fulgidus (strain ATCC 49558 / DSM 4304 / JCM 9628 / NBRC 100126 / VC-16).